The following is a 33-amino-acid chain: Rugosin-B (33 aa).

Cys-27 and Cys-33 form a disulfide bridge.

The protein belongs to the frog skin active peptide (FSAP) family. Brevinin subfamily. In terms of tissue distribution, expressed by the skin glands.

It localises to the secreted. Shows antibacterial activity against both Gram-negative and Gram-positive bacteria. The sequence is that of Rugosin-B from Glandirana rugosa (Japanese wrinkled frog).